A 93-amino-acid polypeptide reads, in one-letter code: Large ribosomal subunit protein uL23cy (93 aa).

This sequence belongs to the universal ribosomal protein uL23 family. As to quaternary structure, part of the 50S ribosomal subunit.

It localises to the plastid. Its subcellular location is the chloroplast. Binds to 23S rRNA. This is Large ribosomal subunit protein uL23cy (rpl23-B) from Sorghum bicolor (Sorghum).